The chain runs to 360 residues: Phenylalanine--tRNA ligase alpha subunit (360 aa).

Position 260 (Glu260) interacts with Mg(2+).

It belongs to the class-II aminoacyl-tRNA synthetase family. Phe-tRNA synthetase alpha subunit type 1 subfamily. As to quaternary structure, tetramer of two alpha and two beta subunits. Mg(2+) serves as cofactor.

The protein localises to the cytoplasm. The enzyme catalyses tRNA(Phe) + L-phenylalanine + ATP = L-phenylalanyl-tRNA(Phe) + AMP + diphosphate + H(+). This chain is Phenylalanine--tRNA ligase alpha subunit, found in Rhodopseudomonas palustris (strain ATCC BAA-98 / CGA009).